The following is a 450-amino-acid chain: Trigger factor (450 aa).

The 86-residue stretch at 161-246 folds into the PPIase FKBP-type domain; that stretch reads GDRVVIDFKG…VKTVEAPEYP (86 aa). Residues 422–450 form a disordered region; that stretch reads PMSLQELMSPQQPEAESAEGESKQDETKE. Basic and acidic residues predominate over residues 441–450; it reads GESKQDETKE.

This sequence belongs to the FKBP-type PPIase family. Tig subfamily.

It is found in the cytoplasm. The catalysed reaction is [protein]-peptidylproline (omega=180) = [protein]-peptidylproline (omega=0). Functionally, involved in protein export. Acts as a chaperone by maintaining the newly synthesized protein in an open conformation. Functions as a peptidyl-prolyl cis-trans isomerase. In Alkalilimnicola ehrlichii (strain ATCC BAA-1101 / DSM 17681 / MLHE-1), this protein is Trigger factor.